The sequence spans 321 residues: tRNA U34 carboxymethyltransferase (321 aa).

Residues lysine 90, tryptophan 104, lysine 109, glycine 129, 151 to 153 (DPT), 180 to 181 (IE), methionine 195, tyrosine 199, and arginine 314 each bind carboxy-S-adenosyl-L-methionine.

The protein belongs to the class I-like SAM-binding methyltransferase superfamily. CmoB family. As to quaternary structure, homotetramer.

The enzyme catalyses carboxy-S-adenosyl-L-methionine + 5-hydroxyuridine(34) in tRNA = 5-carboxymethoxyuridine(34) in tRNA + S-adenosyl-L-homocysteine + H(+). In terms of biological role, catalyzes carboxymethyl transfer from carboxy-S-adenosyl-L-methionine (Cx-SAM) to 5-hydroxyuridine (ho5U) to form 5-carboxymethoxyuridine (cmo5U) at position 34 in tRNAs. This chain is tRNA U34 carboxymethyltransferase, found in Histophilus somni (strain 129Pt) (Haemophilus somnus).